Reading from the N-terminus, the 502-residue chain is Interleukin-17 receptor B (502 aa).

Residues 1–17 (MSLVLLSLAALCRSAVP) form the signal peptide. At 18–292 (REPTVQCGSE…NKSKPGGWLP (275 aa)) the chain is on the extracellular side. Residues N67, N103, N156, N183, N197, and N283 are each glycosylated (N-linked (GlcNAc...) asparagine). Residues 293 to 313 (LLLLSLLVATWVLVAGIYLMW) traverse the membrane as a helical segment. Residues 314 to 502 (RHERIKKTSF…QACHDGCCSL (189 aa)) lie on the Cytoplasmic side of the membrane. One can recognise an SEFIR domain in the interval 331–477 (PIKVLVVYPS…LMKDATAFCA (147 aa)).

In terms of assembly, interacts with DAZAP2. Interacts with TRAF3IP2. Expressed in several endocrine tissues, mostly in fetal and adult liver, kidney, pancreas, testis, colon, brain and small intestine; not detected in peripheral blood leukocytes, lymphoid organs, and most cell lines.

The protein localises to the cell membrane. It is found in the secreted. Functionally, receptor for the pro-inflammatory cytokines IL17B and IL17E. May play a role in controlling the growth and/or differentiation of hematopoietic cells. The protein is Interleukin-17 receptor B (IL17RB) of Homo sapiens (Human).